The primary structure comprises 355 residues: Anthranilate phosphoribosyltransferase (355 aa).

Residues glycine 85, 88-89, threonine 93, 95-98, 113-121, and serine 125 each bind 5-phospho-alpha-D-ribose 1-diphosphate; these read GD, NIST, and KHGNRAASS. Glycine 85 contributes to the anthranilate binding site. Residue serine 97 coordinates Mg(2+). An anthranilate-binding site is contributed by asparagine 116. Anthranilate is bound at residue arginine 171. Mg(2+) is bound by residues aspartate 229 and glutamate 230.

The protein belongs to the anthranilate phosphoribosyltransferase family. Homodimer. Mg(2+) serves as cofactor.

It catalyses the reaction N-(5-phospho-beta-D-ribosyl)anthranilate + diphosphate = 5-phospho-alpha-D-ribose 1-diphosphate + anthranilate. It functions in the pathway amino-acid biosynthesis; L-tryptophan biosynthesis; L-tryptophan from chorismate: step 2/5. Functionally, catalyzes the transfer of the phosphoribosyl group of 5-phosphorylribose-1-pyrophosphate (PRPP) to anthranilate to yield N-(5'-phosphoribosyl)-anthranilate (PRA). This is Anthranilate phosphoribosyltransferase from Acidothermus cellulolyticus (strain ATCC 43068 / DSM 8971 / 11B).